The primary structure comprises 151 residues: Probable transcriptional regulator syrB3 (151 aa).

Residues 1–65 (MVDESNAGPV…QERSEKLRLI (65 aa)) are disordered. A compositionally biased stretch (low complexity) spans 7–23 (AGPVAPAVVADAEVKAP). Basic and acidic residues predominate over residues 52–65 (GYSEQERSEKLRLI).

It belongs to the SyrB family.

The sequence is that of Probable transcriptional regulator syrB3 (syrB3) from Rhizobium meliloti (strain 1021) (Ensifer meliloti).